The chain runs to 321 residues: UDP-N-acetylenolpyruvoylglucosamine reductase (321 aa).

The region spanning 39–205 is the FAD-binding PCMH-type domain; it reads RTGGLAELFY…TAALLEGEPG (167 aa). Arg185 is an active-site residue. Ser234 functions as the Proton donor in the catalytic mechanism. Residue Glu304 is part of the active site.

Belongs to the MurB family. FAD serves as cofactor.

The protein resides in the cytoplasm. It catalyses the reaction UDP-N-acetyl-alpha-D-muramate + NADP(+) = UDP-N-acetyl-3-O-(1-carboxyvinyl)-alpha-D-glucosamine + NADPH + H(+). The protein operates within cell wall biogenesis; peptidoglycan biosynthesis. Its function is as follows. Cell wall formation. The protein is UDP-N-acetylenolpyruvoylglucosamine reductase of Bartonella quintana (strain Toulouse) (Rochalimaea quintana).